Here is a 281-residue protein sequence, read N- to C-terminus: Imidazole glycerol phosphate synthase subunit HisF (281 aa).

Active-site residues include Asp-12 and Asp-131. Positions 256–281 (VRQAEPLPQPAREGLGDSARRAMSSG) are disordered.

It belongs to the HisA/HisF family. As to quaternary structure, heterodimer of HisH and HisF.

The protein localises to the cytoplasm. The catalysed reaction is 5-[(5-phospho-1-deoxy-D-ribulos-1-ylimino)methylamino]-1-(5-phospho-beta-D-ribosyl)imidazole-4-carboxamide + L-glutamine = D-erythro-1-(imidazol-4-yl)glycerol 3-phosphate + 5-amino-1-(5-phospho-beta-D-ribosyl)imidazole-4-carboxamide + L-glutamate + H(+). The protein operates within amino-acid biosynthesis; L-histidine biosynthesis; L-histidine from 5-phospho-alpha-D-ribose 1-diphosphate: step 5/9. Functionally, IGPS catalyzes the conversion of PRFAR and glutamine to IGP, AICAR and glutamate. The HisF subunit catalyzes the cyclization activity that produces IGP and AICAR from PRFAR using the ammonia provided by the HisH subunit. This is Imidazole glycerol phosphate synthase subunit HisF from Thermosynechococcus vestitus (strain NIES-2133 / IAM M-273 / BP-1).